Reading from the N-terminus, the 303-residue chain is MSLSKVKHIVLVLSGKGGVGKSSVTTQLALSLSQAGHSVGVLDVDLTGPSIPRMFGIEDAKVTQAPGGWLPITVHEADPSTGIGSLRVMSLGFLLPRRGDAVVWRGPKKTAMVRQFLSDVFWDELDYLLIDTPPGTSDEHISLAETLLQKAHPEQLAGAVVVTTPQAVATADVRKELNFCTKTGIRVLGVVENMSGFVCPNCSECTNIFMSGGGEVMAKDFNVRFLGRIPIDPQFLVLIETGKSPRYPEGTSVNGQDISSATQVAANGDETRDSRLLVYKYKSCSLAPIFGPITADIIADVTR.

15 to 22 (GKGGVGKS) contributes to the ATP binding site. [4Fe-4S] cluster is bound by residues C199 and C202.

Belongs to the Mrp/NBP35 ATP-binding proteins family. NUBP2/CFD1 subfamily. In terms of assembly, heterotetramer of 2 NBP35 and 2 CFD1 chains. The cofactor is [4Fe-4S] cluster.

The protein resides in the cytoplasm. In terms of biological role, component of the cytosolic iron-sulfur (Fe/S) protein assembly (CIA) machinery. Required for maturation of extramitochondrial Fe-S proteins. The NBP35-CFD1 heterotetramer forms a Fe-S scaffold complex, mediating the de novo assembly of an Fe-S cluster and its transfer to target apoproteins. In Chaetomium globosum (strain ATCC 6205 / CBS 148.51 / DSM 1962 / NBRC 6347 / NRRL 1970) (Soil fungus), this protein is Cytosolic Fe-S cluster assembly factor CFD1.